We begin with the raw amino-acid sequence, 885 residues long: Ankyrin repeat and SAM domain-containing protein 6 (885 aa).

ANK repeat units follow at residues 8–37 (PGLQ…EPVA), 68–97 (AGNS…SVNS), 101–130 (YGWS…DVNA), 134–163 (LGAS…TVDH), 181–210 (LGIT…DPNH), 215–244 (VGWS…NPDH), 282–312 (KRRP…HVNL), 316–345 (DGAT…DMNK), 350–379 (HGWT…DVTL), and 383–414 (NGYT…QVNK). Position 129 is a 3-hydroxyasparagine (Asn-129). 4 disordered regions span residues 415–439 (DRGG…SIPM), 491–522 (MRAP…PRRE), 563–775 (SSDR…ITDE), and 855–885 (FESS…SSRR). Low complexity predominate over residues 608 to 640 (PSISRSPTSPASSGNFNHSPHSSGGASGVGSMS). Ser-650 is modified (phosphoserine). Residues 650–662 (SGGSVDSVLSQIA) are compositionally biased toward polar residues. Low complexity-rich tracts occupy residues 689–713 (GSSP…TSSS) and 722–739 (PPSG…TLTP). Phosphoserine is present on residues Ser-734 and Ser-742. A compositionally biased stretch (low complexity) spans 750 to 770 (SSVSSSSSHRQSKSSGGSSSG). The SAM domain maps to 773–836 (TDEDELTGIL…LAAISELNAG (64 aa)). A compositionally biased stretch (polar residues) spans 855–865 (FESSASNTRAP). Residues 876–885 (RPEETVSSRR) are compositionally biased toward basic and acidic residues.

In terms of assembly, homooligomer. Interacts with NEK8. Central component of a complex containing at least ANKS6, INVS, NEK8 and NPHP3. ANKS6 may organize complex assembly by linking INVS and NPHP3 to NEK8 and INVS may target the complex to the proximal ciliary axoneme. Interacts (via SAM domain) with BICC1 (via KH domains) in an RNA-dependent manner. Interacts (via SAM domain) with ANKS3 (via SAM domain). Post-translationally, hydroxylated at Asn-129, most probably by HIF1AN. This hydroxylation results in decreased NEK8-binding. Widely expressed with moderate level in brain, skeletal muscle and testis. Expressed in renal tubules.

It localises to the cell projection. The protein resides in the cilium. The protein localises to the cytoplasm. Required for renal function. The sequence is that of Ankyrin repeat and SAM domain-containing protein 6 (Anks6) from Rattus norvegicus (Rat).